The chain runs to 308 residues: tRNA dimethylallyltransferase (308 aa).

14-21 provides a ligand contact to ATP; it reads GPTASGKS. A substrate-binding site is contributed by 16–21; the sequence is TASGKS. An interaction with substrate tRNA region spans residues 39–42; the sequence is DSMQ.

This sequence belongs to the IPP transferase family. Monomer. The cofactor is Mg(2+).

The catalysed reaction is adenosine(37) in tRNA + dimethylallyl diphosphate = N(6)-dimethylallyladenosine(37) in tRNA + diphosphate. Its function is as follows. Catalyzes the transfer of a dimethylallyl group onto the adenine at position 37 in tRNAs that read codons beginning with uridine, leading to the formation of N6-(dimethylallyl)adenosine (i(6)A). The polypeptide is tRNA dimethylallyltransferase (Bradyrhizobium sp. (strain ORS 278)).